Here is a 134-residue protein sequence, read N- to C-terminus: Profilin-3 (134 aa).

C13 and C118 are disulfide-bonded. The Involved in PIP2 interaction signature appears at 84-100; the sequence is AVIRGKKGSGGITIKKT. The residue at position 114 (T114) is a Phosphothreonine.

It belongs to the profilin family. In terms of assembly, occurs in many kinds of cells as a complex with monomeric actin in a 1:1 ratio. Phosphorylated by MAP kinases.

Its subcellular location is the cytoplasm. It localises to the cytoskeleton. In terms of biological role, binds to actin and affects the structure of the cytoskeleton. At high concentrations, profilin prevents the polymerization of actin, whereas it enhances it at low concentrations. The sequence is that of Profilin-3 from Olea europaea (Common olive).